The sequence spans 100 residues: NADH-quinone oxidoreductase subunit K (100 aa).

3 helical membrane-spanning segments follow: residues 3–23, 29–49, and 63–83; these read PTAY…IGVL, IMIF…LVAF, and FIVM…IVAI.

This sequence belongs to the complex I subunit 4L family. NDH-1 is composed of 15 different subunits. Subunits NuoA, H, J, K, L, M, N constitute the membrane sector of the complex.

The protein resides in the cell membrane. It catalyses the reaction a quinone + NADH + 5 H(+)(in) = a quinol + NAD(+) + 4 H(+)(out). Its function is as follows. NDH-1 shuttles electrons from NADH, via FMN and iron-sulfur (Fe-S) centers, to quinones in the respiratory chain. The immediate electron acceptor for the enzyme in this species is believed to be a menaquinone. Couples the redox reaction to proton translocation (for every two electrons transferred, four hydrogen ions are translocated across the cytoplasmic membrane), and thus conserves the redox energy in a proton gradient. The protein is NADH-quinone oxidoreductase subunit K of Deinococcus geothermalis (strain DSM 11300 / CIP 105573 / AG-3a).